The primary structure comprises 537 residues: Phosphoenolpyruvate carboxykinase (ATP) (537 aa).

Substrate is bound by residues Arg-61, Tyr-195, and Lys-201. Residues Lys-201, His-220, and 236-244 (GLSGTGKTT) each bind ATP. Positions 201 and 220 each coordinate Mn(2+). Residue Asp-257 participates in Mn(2+) binding. Residues Glu-285, Arg-323, and Thr-448 each coordinate ATP. Arg-323 contributes to the substrate binding site.

The protein belongs to the phosphoenolpyruvate carboxykinase (ATP) family. The cofactor is Mn(2+).

It localises to the cytoplasm. It catalyses the reaction oxaloacetate + ATP = phosphoenolpyruvate + ADP + CO2. It participates in carbohydrate biosynthesis; gluconeogenesis. Involved in the gluconeogenesis. Catalyzes the conversion of oxaloacetate (OAA) to phosphoenolpyruvate (PEP) through direct phosphoryl transfer between the nucleoside triphosphate and OAA. The sequence is that of Phosphoenolpyruvate carboxykinase (ATP) from Azorhizobium caulinodans (strain ATCC 43989 / DSM 5975 / JCM 20966 / LMG 6465 / NBRC 14845 / NCIMB 13405 / ORS 571).